Consider the following 473-residue polypeptide: Pre-mRNA-splicing factor PRP46 (473 aa).

Over residues 1 to 14 the composition is skewed to polar residues; sequence MSTSLETPSGTSAG. Disordered regions lie at residues 1-21 and 103-126; these read MSTSLETPSGTSAGPSIVASG and GPNVKLIGGPEAEKASSSTPQAVA. WD repeat units lie at residues 180–219, 222–261, 264–303, 306–347, 349–388, 391–429, and 440–473; these read GHMGWVRAVAMDPGSQWFATGAGDRVIKIWDLASGELKLS, GHISTIRGLAVSDRHPYLFSCAEDKMVKCWDLETNKVIRH, GHFSGVYSLSVHPTLDVLVTGGRDASVRVWDMRTRANIFT, GHTS…NTLT, HKKSVRALAIHPTEYSFASASSGGNNIKKWKCPEGIFVNN, GHEAIINTLSINSENVLFSGADNGTLTLWDYKTGLPFQH, and DAEAGVFCSTFDKTGTRLITGGADKTIKVYSEQA.

This sequence belongs to the WD repeat PRL1/PRL2 family. In terms of assembly, associated with the spliceosome.

The protein localises to the cytoplasm. It is found in the nucleus. Its function is as follows. Involved in pre-mRNA splicing and required for cell cycle progression at G2/M. In Cryptococcus neoformans var. neoformans serotype D (strain B-3501A) (Filobasidiella neoformans), this protein is Pre-mRNA-splicing factor PRP46 (PRP46).